The sequence spans 268 residues: (+)-cis,trans-nepetalactol synthase NEPS2 (268 aa).

NAD(+) is bound by residues 16 to 22 (GGASGIG), 41 to 43 (DIQ), 65 to 66 (DI), N92, 163 to 167 (YVMSK), and 196 to 200 (VLTPL).

This sequence belongs to the short-chain dehydrogenases/reductases (SDR) family.

It carries out the reaction (S)-8-oxocitronellyl enol = cis-trans-nepetalactol. Functions as a non-oxidoreductive cyclase to promote the formation of cis-trans-nepetalactol. Cis-trans-nepetalactol is then oxidized by NEPS1 into cis-trans-nepetalactone, which belongs to a family of metabolites that are both insect-repellent and have euphoric effect in cats. Binds NAD(+) as classical short-chain dehydrogenase/reductase (SDR), but does not utilize it for its redox-neutral cyclase activity. The protein is (+)-cis,trans-nepetalactol synthase NEPS2 of Nepeta racemosa (Catmint).